The following is a 100-amino-acid chain: Small ribosomal subunit protein uS14c (100 aa).

This sequence belongs to the universal ribosomal protein uS14 family. Part of the 30S ribosomal subunit.

It localises to the plastid. The protein resides in the chloroplast. In terms of biological role, binds 16S rRNA, required for the assembly of 30S particles. In Physcomitrium patens (Spreading-leaved earth moss), this protein is Small ribosomal subunit protein uS14c.